We begin with the raw amino-acid sequence, 840 residues long: MNQEVKNKIFSILKITFATALFIFVAITLYRELSGINFKDTLVEFSKINRMSLVLLFIGGGASLVILSMYDVILSRALKMDISLGKVLRVSYIINALNAIVGFGGFIGAGVRAMVYKNYTHDKKKLVHFISLILISMLTGLSLLSLLIVFHVFDASLILDKITWVRWVLYVVSFFLPLFIIYSMVRPPDKNNRFVGLYCTLVSCVEWLAAAVVLYFCGVIVDAHVSFMSFIAIFIIAALSGLVSFIPGGFGAFDLVVLLGFKTLGVPEEKVLLMLLLYRFAYYFVPVIIALILSSFEFGTSAKKYIEGSKYFIPAKDVTSFLMSYQKDIIAKIPSLSLAILVFFTSMIFFVNNLTIVYDALYDGNHLTYYILLAIHTSACLLLLLNVVGIYKQSRRAIIFAMISILLITVATFFTYASYILITWLAIIFVLLIVAFRRARRLKRPVRMRNIVAMLLFSLFILYVNHIFIAGTLYALDIYTIEMHTSVLRYYFWLTILIIAIIIGMIAWLFDYQFSKVRISSKIEDCEEIINQYGGNYLSHLIYSGDKQFFTNENKTAFLMYRYKASSLVVLGDPLGDENAFDELLEAFYNYAEYLGYDVIFYQVTDQHMPLYHNFGNQFFKLGEEAIIDLTQFSTSGKKRRGFRATLNKFDELNISFEIIEPPFSTEFINELQHVSDLWLDNRQEMHFSVGEFNEEYLSKAPIGVMRNEENEVIAFCSLMPTYFNDAISVDLIRWLPELDLPLMDGLYLHMLLWSKEQGYTKFNMGMATLSNVGQLHYSYLRERLAGRVFEHFNGLYRFQGLRRYKSKYNPNWEPRFLVYRKDNSLWESLSKVMRVIRHK.

Topologically, residues 1–8 are cytoplasmic; it reads MNQEVKNK. A helical transmembrane segment spans residues 9–29; sequence IFSILKITFATALFIFVAITL. Residues 30-52 lie on the Extracellular side of the membrane; the sequence is YRELSGINFKDTLVEFSKINRMS. Residues 53–73 traverse the membrane as a helical segment; it reads LVLLFIGGGASLVILSMYDVI. Over 74–89 the chain is Cytoplasmic; the sequence is LSRALKMDISLGKVLR. Residues 90–110 traverse the membrane as a helical segment; it reads VSYIINALNAIVGFGGFIGAG. Residues 111-128 lie on the Extracellular side of the membrane; the sequence is VRAMVYKNYTHDKKKLVH. A helical transmembrane segment spans residues 129-149; sequence FISLILISMLTGLSLLSLLIV. Residues 150 to 161 are Cytoplasmic-facing; the sequence is FHVFDASLILDK. Residues 162–182 traverse the membrane as a helical segment; sequence ITWVRWVLYVVSFFLPLFIIY. Residues 183-200 are Extracellular-facing; the sequence is SMVRPPDKNNRFVGLYCT. A helical transmembrane segment spans residues 201 to 221; sequence LVSCVEWLAAAVVLYFCGVIV. The Cytoplasmic segment spans residues 222-229; that stretch reads DAHVSFMS. The helical transmembrane segment at 230–250 threads the bilayer; it reads FIAIFIIAALSGLVSFIPGGF. Over 251–271 the chain is Extracellular; it reads GAFDLVVLLGFKTLGVPEEKV. The chain crosses the membrane as a helical span at residues 272–292; that stretch reads LLMLLLYRFAYYFVPVIIALI. The Cytoplasmic segment spans residues 293–337; the sequence is LSSFEFGTSAKKYIEGSKYFIPAKDVTSFLMSYQKDIIAKIPSLS. The chain crosses the membrane as a helical span at residues 338 to 358; that stretch reads LAILVFFTSMIFFVNNLTIVY. At 359–369 the chain is on the extracellular side; sequence DALYDGNHLTY. A helical transmembrane segment spans residues 370–390; the sequence is YILLAIHTSACLLLLLNVVGI. Over 391-394 the chain is Cytoplasmic; the sequence is YKQS. The next 2 membrane-spanning stretches (helical) occupy residues 395–415 and 416–436; these read RRAIIFAMISILLITVATFFT and YASYILITWLAIIFVLLIVAF. Over 437–450 the chain is Cytoplasmic; that stretch reads RRARRLKRPVRMRN. A helical membrane pass occupies residues 451–471; that stretch reads IVAMLLFSLFILYVNHIFIAG. Over 472–489 the chain is Extracellular; sequence TLYALDIYTIEMHTSVLR. A helical membrane pass occupies residues 490–510; that stretch reads YYFWLTILIIAIIIGMIAWLF. At 511-840 the chain is on the cytoplasmic side; it reads DYQFSKVRIS…SKVMRVIRHK (330 aa).

This sequence belongs to the LPG synthase family.

Its subcellular location is the cell membrane. It catalyses the reaction L-lysyl-tRNA(Lys) + a 1,2-diacyl-sn-glycero-3-phospho-(1'-sn-glycerol) = a 1,2-diacyl-sn-glycero-3-phospho-1'-(3'-O-L-lysyl)-sn-glycerol + tRNA(Lys). Functionally, catalyzes the transfer of a lysyl group from L-lysyl-tRNA(Lys) to membrane-bound phosphatidylglycerol (PG), which produces lysylphosphatidylglycerol (LPG), a major component of the bacterial membrane with a positive net charge. LPG synthesis contributes to bacterial virulence as it is involved in the resistance mechanism against cationic antimicrobial peptides (CAMP) produces by the host's immune system (defensins, cathelicidins) and by the competing microorganisms (bacteriocins). In fact, the modification of anionic phosphatidylglycerol with positively charged L-lysine results in repulsion of the peptides. The sequence is that of Phosphatidylglycerol lysyltransferase (mprF) from Staphylococcus aureus (strain COL).